A 73-amino-acid chain; its full sequence is Beta-defensin 50 (73 aa).

Residues 1–23 (MKTLCFLLLTSGLLYLMVKGVGS) form the signal peptide. Cystine bridges form between cysteine 34-cysteine 63 and cysteine 46-cysteine 64.

The protein belongs to the beta-defensin family. In terms of tissue distribution, highly expressed in prostate. Not expressed in uterus, epididymis, ovary, testis, spleen, submaxillary gland, thymus, thyroid, pancreas, smooth muscle, skeletal muscle, heart, kidney, lung, liver, eye and brain.

The protein resides in the secreted. Functionally, has bactericidal activity. The chain is Beta-defensin 50 (Defb50) from Mus musculus (Mouse).